A 507-amino-acid chain; its full sequence is Cytochrome P450 monooxygenase cloA (507 aa).

A helical transmembrane segment spans residues 15-35 (WTWILLTTCIALTSPLVLKGI). Residue N247 is glycosylated (N-linked (GlcNAc...) asparagine). C450 serves as a coordination point for heme.

The protein belongs to the cytochrome P450 family. It depends on heme as a cofactor.

The protein localises to the membrane. It functions in the pathway alkaloid biosynthesis; ergot alkaloid biosynthesis. Its function is as follows. Cytochrome P450 monooxygenase; part of the gene cluster that mediates the biosynthesis of fungal ergot alkaloid. DmaW catalyzes the first step of ergot alkaloid biosynthesis by condensing dimethylallyl diphosphate (DMAP) and tryptophan to form 4-dimethylallyl-L-tryptophan. The second step is catalyzed by the methyltransferase easF that methylates 4-dimethylallyl-L-tryptophan in the presence of S-adenosyl-L-methionine, resulting in the formation of 4-dimethylallyl-L-abrine. The catalase easC and the FAD-dependent oxidoreductase easE then transform 4-dimethylallyl-L-abrine to chanoclavine-I which is further oxidized by easD in the presence of NAD(+), resulting in the formation of chanoclavine-I aldehyde. Agroclavine dehydrogenase easG then mediates the conversion of chanoclavine-I aldehyde to agroclavine via a non-enzymatic adduct reaction: the substrate is an iminium intermediate that is formed spontaneously from chanoclavine-I aldehyde in the presence of glutathione. The presence of easA is not required to complete this reaction. Further conversion of agroclavine to paspalic acid is a two-step process involving oxidation of agroclavine to elymoclavine and of elymoclavine to paspalic acid, the second step being performed by the elymoclavine oxidase cloA. Paspalic acid is then further converted to D-lysergic acid. Ergopeptines are assembled from D-lysergic acid and three different amino acids by the D-lysergyl-peptide-synthetases composed each of a monomudular and a trimodular nonribosomal peptide synthetase subunit. LpsB and lpsC encode the monomodular subunits responsible for D-lysergic acid activation and incorporation into the ergopeptine backbone. LpsA1 and A2 subunits encode the trimodular nonribosomal peptide synthetase assembling the tripeptide portion of ergopeptines. LpsA1 is responsible for formation of the major ergopeptine, ergotamine, and lpsA2 for alpha-ergocryptine, the minor ergopeptine of the total alkaloid mixture elaborated by C.purpurea. D-lysergyl-tripeptides are assembled by the nonribosomal peptide synthetases and released as N-(D-lysergyl-aminoacyl)-lactams. Cyclolization of the D-lysergyl-tripeptides is performed by the Fe(2+)/2-ketoglutarate-dependent dioxygenase easH which introduces a hydroxyl group into N-(D-lysergyl-aminoacyl)-lactam at alpha-C of the aminoacyl residue followed by spontaneous condensation with the terminal lactam carbonyl group. In Claviceps purpurea (Ergot fungus), this protein is Cytochrome P450 monooxygenase cloA.